Reading from the N-terminus, the 136-residue chain is ATP synthase epsilon chain (136 aa).

The segment at 100 to 120 is disordered; it reads QGALEEANRGEDKPNQLKASN. Over residues 105 to 114 the composition is skewed to basic and acidic residues; sequence EANRGEDKPN.

The protein belongs to the ATPase epsilon chain family. F-type ATPases have 2 components, CF(1) - the catalytic core - and CF(0) - the membrane proton channel. CF(1) has five subunits: alpha(3), beta(3), gamma(1), delta(1), epsilon(1). CF(0) has three main subunits: a, b and c.

It is found in the cellular thylakoid membrane. Functionally, produces ATP from ADP in the presence of a proton gradient across the membrane. The sequence is that of ATP synthase epsilon chain (atpC) from Synechocystis sp. (strain ATCC 27184 / PCC 6803 / Kazusa).